The chain runs to 117 residues: Appetite-regulating hormone (117 aa).

The N-terminal stretch at Met-1–Ala-23 is a signal peptide. The O-decanoyl serine; alternate moiety is linked to residue Ser-26. Ser-26 is lipidated: O-hexanoyl serine; alternate. Residue Ser-26 is the site of O-octanoyl serine; alternate attachment. The tract at residues Ser-29–Pro-50 is disordered. Over residues Glu-31–Lys-43 the composition is skewed to basic and acidic residues. A propeptide spans Ala-52–Arg-75 (removed in mature form). A Leucine amide modification is found at Leu-98. Residues Gly-99–Lys-117 constitute a propeptide, removed in mature form.

This sequence belongs to the motilin family. In terms of processing, O-octanoylated by GOAT/MBOAT4. O-octanoylation or O-decanoylation is essential for ghrelin activity. The O-decanoylated forms Ghrelin-27-C10 and Ghrelin-28-C10 differ in the length of the carbon backbone of the carboxylic acid bound to Ser-26. A small fraction of ghrelin, ghrelin-28-C10:1, may be modified with a singly unsaturated carboxylic acid. Also O-acetylated and O-butyrylated on Ser-26 to minor levels. Amidation of Leu-98 is essential for obestatin activity. Highest level in stomach. All forms are found in serum as well. Other tissues compensate for the loss of ghrelin synthesis in the stomach following gastrectomy.

It is found in the secreted. Functionally, ghrelin is the ligand for growth hormone secretagogue receptor type 1 (GHSR). Induces the release of growth hormone from the pituitary. Has an appetite-stimulating effect, induces adiposity and stimulates gastric acid secretion. Involved in growth regulation. May be the ligand for GPR39. May have an appetite-reducing effect resulting in decreased food intake. May reduce gastric emptying activity and jejunal motility. This is Appetite-regulating hormone (GHRL) from Homo sapiens (Human).